Here is a 298-residue protein sequence, read N- to C-terminus: Probable endonuclease 4 (298 aa).

Residues His-69, His-111, Glu-146, Asp-180, His-183, His-215, Asp-228, His-230, and Glu-260 each coordinate Zn(2+).

It belongs to the AP endonuclease 2 family. It depends on Zn(2+) as a cofactor.

The enzyme catalyses Endonucleolytic cleavage to 5'-phosphooligonucleotide end-products.. Its function is as follows. Endonuclease IV plays a role in DNA repair. It cleaves phosphodiester bonds at apurinic or apyrimidinic (AP) sites, generating a 3'-hydroxyl group and a 5'-terminal sugar phosphate. This is Probable endonuclease 4 from Bacillus cereus (strain G9842).